The chain runs to 608 residues: MATMLKLLALTLAISESAIGAVMHPPGNSHPGTHMGTTNNTHCGADFCTWWHDSGEINTQTPVQPGNVRQSHKYSVQVSLAGTNNFHDSFVYESIPRNGNGRIYAPTDPPNSNTLDSSVDDGISIEPSIGLNMAWSQFEYSHDVDVKILATDGSSLGSPSDVVIRPVSISYAISQSDDGGIVIRVPADANGRKFSVEFKTDLYTFLSDGNEYVTSGGSVVGVEPTNALVIFASPFLPSGMIPHMTPDNTQTMTPGPINNGDWGAKSILYFPPGVYWMNQDQSGNSGKLGSNHIRLNSNTYWVYLAPGAYVKGAIEYFTKQNFYATGHGILSGENYVYQANAGDNYIAVKSDSTSLRMWWHNNLGGGQTWYCVGPTINAPPFNTMDFNGNSGISSQISDYKQVGAFFFQTDGPEIYPNSVVHDVFWHVNDDAIKIYYSGASVSRATIWKCHNDPIIQMGWTSRDISGVTIDTLNVIHTRYIKSETVVPSAIIGASPFYASGMSPDSRKSISMTVSNVVCEGLCPSLFRITPLQNYKNFVVKNVAFPDGLQTNSIGTGESIIPAASGLTMGLNISNWTVGGQKVTMENFQANSLGQFNIDGSYWGEWQIS.

The signal sequence occupies residues 1-19; it reads MATMLKLLALTLAISESAI. Residues 20 to 34 constitute a propeptide that is removed on maturation; that stretch reads GAVMHPPGNSHPGTH. Asn-39, Asn-571, and Asn-574 each carry an N-linked (GlcNAc...) asparagine glycan.

Belongs to the glycosyl hydrolase 49 family. In terms of processing, N-glycosylated.

The protein localises to the secreted. The enzyme catalyses Endohydrolysis of (1-&gt;6)-alpha-D-glucosidic linkages in dextran.. This chain is Dextranase (DEX), found in Talaromyces minioluteus (Filamentous fungus).